The sequence spans 120 residues: Ribonuclease P protein component (120 aa).

It belongs to the RnpA family. Consists of a catalytic RNA component (M1 or rnpB) and a protein subunit.

It carries out the reaction Endonucleolytic cleavage of RNA, removing 5'-extranucleotides from tRNA precursor.. Its function is as follows. RNaseP catalyzes the removal of the 5'-leader sequence from pre-tRNA to produce the mature 5'-terminus. It can also cleave other RNA substrates such as 4.5S RNA. The protein component plays an auxiliary but essential role in vivo by binding to the 5'-leader sequence and broadening the substrate specificity of the ribozyme. This chain is Ribonuclease P protein component, found in Thioalkalivibrio sulfidiphilus (strain HL-EbGR7).